A 360-amino-acid chain; its full sequence is WAT1-related protein At3g28070 (360 aa).

The next 10 membrane-spanning stretches (helical) occupy residues 15–35 (AVFLTAMLVVETSVVGISTLF), 45–65 (IYPFLGYSYLLASLLLLPSLF), 84–104 (IGLLGFLGSMYVITGYIGIEY), 108–128 (TLASAINNITPALTFILAIIF), 140–160 (SLAKLMGTILSLIGALVVIFY), 190–210 (WLIGGALLTMQGIFVSVSFIL), 224–244 (VSFLYTVCVSIVTSTIGLVVE), 248–268 (PSVWIIHFDITLITIVTMAIV), 286–306 (LYLAIFKPLSILIAVVMGAIF), and 311–331 (LYLGCLIGGILITLGFYAVMW). One can recognise an EamA domain in the interval 30 to 158 (GISTLFKFAT…LSLIGALVVI (129 aa)).

This sequence belongs to the drug/metabolite transporter (DMT) superfamily. Plant drug/metabolite exporter (P-DME) (TC 2.A.7.4) family.

Its subcellular location is the membrane. The sequence is that of WAT1-related protein At3g28070 from Arabidopsis thaliana (Mouse-ear cress).